Reading from the N-terminus, the 165-residue chain is Endoribonuclease YbeY (165 aa).

Positions 130, 134, and 140 each coordinate Zn(2+).

The protein belongs to the endoribonuclease YbeY family. The cofactor is Zn(2+).

Its subcellular location is the cytoplasm. Single strand-specific metallo-endoribonuclease involved in late-stage 70S ribosome quality control and in maturation of the 3' terminus of the 16S rRNA. This chain is Endoribonuclease YbeY, found in Streptococcus thermophilus (strain CNRZ 1066).